The chain runs to 192 residues: Ethylene-responsive transcription factor ERF027 (192 aa).

Residues 18-74 (VYRGIRCRSGKWVSEIREPRKTTRIWLGTYPMAEMAAAAYDVAAMALKGREAVLNFP) constitute a DNA-binding region (AP2/ERF). Disordered regions lie at residues 104–132 (CEEG…HVDN) and 167–192 (APPS…LWGY). Over residues 179-192 (DSPENSNDEDLWGY) the composition is skewed to acidic residues.

It belongs to the AP2/ERF transcription factor family. ERF subfamily.

It localises to the nucleus. Probably acts as a transcriptional activator. Binds to the GCC-box pathogenesis-related promoter element. May be involved in the regulation of gene expression by stress factors and by components of stress signal transduction pathways. This chain is Ethylene-responsive transcription factor ERF027 (ERF027), found in Arabidopsis thaliana (Mouse-ear cress).